Reading from the N-terminus, the 256-residue chain is Alcohol dehydrogenase (256 aa).

At S2 the chain carries N-acetylserine. NAD(+)-binding positions include 12 to 41 (FVAG…LDRI) and D65. Position 140 (S140) interacts with substrate. Y153 serves as the catalytic Proton acceptor. K157 contacts NAD(+).

This sequence belongs to the short-chain dehydrogenases/reductases (SDR) family. As to quaternary structure, homodimer.

The catalysed reaction is a primary alcohol + NAD(+) = an aldehyde + NADH + H(+). It carries out the reaction a secondary alcohol + NAD(+) = a ketone + NADH + H(+). Its activity is regulated as follows. Inhibited by 2,2,2-trifluoroethanol and pyrazole. This chain is Alcohol dehydrogenase (Adh), found in Drosophila melanogaster (Fruit fly).